Consider the following 693-residue polypeptide: Periplasmic alpha-galactoside-binding protein (693 aa).

A signal peptide spans 1 to 20; the sequence is MKTHRLNMTASLLIGISAFA.

The protein belongs to the bacterial solute-binding protein 5 family.

The protein localises to the periplasm. In terms of biological role, involved in the transport of alpha-galactosides. Required for the utilization of raffinose and melibiose. Probably acts as a periplasmic substrate-binding protein for a transport system. This chain is Periplasmic alpha-galactoside-binding protein, found in Rhizobium meliloti (strain 1021) (Ensifer meliloti).